A 434-amino-acid polypeptide reads, in one-letter code: Adenylosuccinate synthetase (434 aa).

GTP contacts are provided by residues 22-28 (GDEGKGK) and 50-52 (GHT). Catalysis depends on aspartate 23, which acts as the Proton acceptor. Mg(2+)-binding residues include aspartate 23 and glycine 50. Residues 23 to 26 (DEGK), 48 to 51 (NAGH), threonine 139, arginine 153, glutamine 234, threonine 249, and arginine 313 each bind IMP. Catalysis depends on histidine 51, which acts as the Proton donor. A substrate-binding site is contributed by 309-315 (ATTGRKR). GTP contacts are provided by residues arginine 315, 341–343 (KLD), and 423–425 (SVG).

The protein belongs to the adenylosuccinate synthetase family. As to quaternary structure, homodimer. Mg(2+) is required as a cofactor.

It is found in the cytoplasm. The enzyme catalyses IMP + L-aspartate + GTP = N(6)-(1,2-dicarboxyethyl)-AMP + GDP + phosphate + 2 H(+). Its pathway is purine metabolism; AMP biosynthesis via de novo pathway; AMP from IMP: step 1/2. Its function is as follows. Plays an important role in the de novo pathway of purine nucleotide biosynthesis. Catalyzes the first committed step in the biosynthesis of AMP from IMP. The polypeptide is Adenylosuccinate synthetase (Chlorobium limicola (strain DSM 245 / NBRC 103803 / 6330)).